The following is a 242-amino-acid chain: Segregation and condensation protein A (242 aa).

Belongs to the ScpA family. Component of a cohesin-like complex composed of ScpA, ScpB and the Smc homodimer, in which ScpA and ScpB bind to the head domain of Smc. The presence of the three proteins is required for the association of the complex with DNA.

It is found in the cytoplasm. Participates in chromosomal partition during cell division. May act via the formation of a condensin-like complex containing Smc and ScpB that pull DNA away from mid-cell into both cell halves. The polypeptide is Segregation and condensation protein A (Streptococcus pneumoniae serotype 4 (strain ATCC BAA-334 / TIGR4)).